The primary structure comprises 410 residues: LL-diaminopimelate aminotransferase (410 aa).

Substrate contacts are provided by Tyr-15 and Gly-42. Residues Tyr-72, 108–109 (AK), Tyr-132, Asn-187, Tyr-218, and 246–248 (SFS) each bind pyridoxal 5'-phosphate. Positions 109, 132, and 187 each coordinate substrate. Lys-249 is modified (N6-(pyridoxal phosphate)lysine). 2 residues coordinate pyridoxal 5'-phosphate: Arg-257 and Asn-292. Substrate-binding residues include Asn-292 and Arg-388.

This sequence belongs to the class-I pyridoxal-phosphate-dependent aminotransferase family. LL-diaminopimelate aminotransferase subfamily. Homodimer. Pyridoxal 5'-phosphate is required as a cofactor.

The enzyme catalyses (2S,6S)-2,6-diaminopimelate + 2-oxoglutarate = (S)-2,3,4,5-tetrahydrodipicolinate + L-glutamate + H2O + H(+). It participates in amino-acid biosynthesis; L-lysine biosynthesis via DAP pathway; LL-2,6-diaminopimelate from (S)-tetrahydrodipicolinate (aminotransferase route): step 1/1. Involved in the synthesis of meso-diaminopimelate (m-DAP or DL-DAP), required for both lysine and peptidoglycan biosynthesis. Catalyzes the direct conversion of tetrahydrodipicolinate to LL-diaminopimelate. The polypeptide is LL-diaminopimelate aminotransferase (Picosynechococcus sp. (strain ATCC 27264 / PCC 7002 / PR-6) (Agmenellum quadruplicatum)).